We begin with the raw amino-acid sequence, 700 residues long: Neoverrucotoxin subunit beta (700 aa).

The B30.2/SPRY domain occupies histidine 506 to leucine 700.

The protein belongs to the SNTX/VTX toxin family. In terms of assembly, heterodimer of alpha and beta subunits. In terms of processing, not glycosylated. Post-translationally, four intrachain disulfide linkages are present in the heterodimer. No interchain disulfide bound links the two subunits. In terms of tissue distribution, expressed by the venom gland.

The protein localises to the secreted. Functionally, has hemolytic and lethal activities. Its hemolytic activity is inhibited by anionic lipids, especially potently by cardiolipin. This Synanceia verrucosa (Reef stonefish) protein is Neoverrucotoxin subunit beta.